The following is a 180-amino-acid chain: Crossover junction endodeoxyribonuclease RuvC (180 aa).

Catalysis depends on residues Asp-7, Glu-66, and Asp-138. Mg(2+) contacts are provided by Asp-7, Glu-66, and Asp-138.

Belongs to the RuvC family. Homodimer which binds Holliday junction (HJ) DNA. The HJ becomes 2-fold symmetrical on binding to RuvC with unstacked arms; it has a different conformation from HJ DNA in complex with RuvA. In the full resolvosome a probable DNA-RuvA(4)-RuvB(12)-RuvC(2) complex forms which resolves the HJ. Mg(2+) is required as a cofactor.

The protein resides in the cytoplasm. It catalyses the reaction Endonucleolytic cleavage at a junction such as a reciprocal single-stranded crossover between two homologous DNA duplexes (Holliday junction).. Functionally, the RuvA-RuvB-RuvC complex processes Holliday junction (HJ) DNA during genetic recombination and DNA repair. Endonuclease that resolves HJ intermediates. Cleaves cruciform DNA by making single-stranded nicks across the HJ at symmetrical positions within the homologous arms, yielding a 5'-phosphate and a 3'-hydroxyl group; requires a central core of homology in the junction. The consensus cleavage sequence is 5'-(A/T)TT(C/G)-3'. Cleavage occurs on the 3'-side of the TT dinucleotide at the point of strand exchange. HJ branch migration catalyzed by RuvA-RuvB allows RuvC to scan DNA until it finds its consensus sequence, where it cleaves and resolves the cruciform DNA. The protein is Crossover junction endodeoxyribonuclease RuvC of Herminiimonas arsenicoxydans.